The following is a 564-amino-acid chain: Poly(U)-binding-splicing factor PUF60 (564 aa).

Residues 1 to 521 (MATATIALQV…EDAEIIVKIF (521 aa)) are inhibits homodimerization. The segment at 37 to 61 (KWKPPQGTESIKMENGQSTGTKLGL) is disordered. Residue lysine 48 forms a Glycyl lysine isopeptide (Lys-Gly) (interchain with G-Cter in SUMO2) linkage. Threonine 65 bears the Phosphothreonine mark. The tract at residues 82-564 (QSIKSVLVKQ…ERFDNSDLSA (483 aa)) is inhibits transcriptional repression, interaction with ERCC3 and apoptosis induction. Lysine 85 participates in a covalent cross-link: Glycyl lysine isopeptide (Lys-Gly) (interchain with G-Cter in SUMO2). Position 117 is a phosphoserine (serine 117). RRM domains are found at residues 134-212 (CRVY…RPSN) and 231-309 (NRIY…KAVT). A Phosphoserine modification is found at serine 249. Lysine 256 carries the post-translational modification N6-acetyllysine. At threonine 319 the chain carries Phosphothreonine. Positions 421–442 (KKEKEEEELFPESERPEMLSEQ) are disordered. Lysine 424 is covalently cross-linked (Glycyl lysine isopeptide (Lys-Gly) (interchain with G-Cter in SUMO2)). Positions 432 to 442 (ESERPEMLSEQ) are enriched in basic and acidic residues. Lysine 459 bears the N6-acetyllysine mark. Lysine 463 participates in a covalent cross-link: Glycyl lysine isopeptide (Lys-Gly) (interchain with G-Cter in SUMO2). Residues 467–554 (TVMVLRNMVD…RKVVAEVYDQ (88 aa)) enclose the RRM 3; atypical domain.

The protein belongs to the RRM half pint family. As to quaternary structure, homodimer. Associates with the spliceosome. Found in a complex with RO60 and Y5 RNA. Found in a complex with FUBP1 and far upstream element (FUSE) DNA segment. Interacts directly with ERCC3. Interacts with CDK7 and GTF2H1. Interacts with SRSF11/P54. Interacts with ARGLU1; interaction may be involved in ARGLU1-mediated modulation of alternative splicing.

It localises to the nucleus. DNA- and RNA-binding protein, involved in several nuclear processes such as pre-mRNA splicing, apoptosis and transcription regulation. In association with FUBP1 regulates MYC transcription at the P2 promoter through the core-TFIIH basal transcription factor. Acts as a transcriptional repressor through the core-TFIIH basal transcription factor. Represses FUBP1-induced transcriptional activation but not basal transcription. Decreases ERCC3 helicase activity. Is also involved in pre-mRNA splicing. Promotes splicing of an intron with weak 3'-splice site and pyrimidine tract in a cooperative manner with U2AF2. Involved in apoptosis induction when overexpressed in HeLa cells. Modulates alternative splicing of several mRNAs. Binds to relaxed DNA of active promoter regions. Binds to the pyrimidine tract and 3'-splice site regions of pre-mRNA; binding is enhanced in presence of U2AF2. Binds to Y5 RNA in association with RO60. Binds to poly(U) RNA. The sequence is that of Poly(U)-binding-splicing factor PUF60 from Rattus norvegicus (Rat).